Consider the following 169-residue polypeptide: NADH-quinone oxidoreductase subunit B (169 aa).

[4Fe-4S] cluster-binding residues include Cys42, Cys43, Cys107, and Cys136.

The protein belongs to the complex I 20 kDa subunit family. In terms of assembly, NDH-1 is composed of 14 different subunits. Subunits NuoB, C, D, E, F, and G constitute the peripheral sector of the complex. [4Fe-4S] cluster is required as a cofactor.

The protein resides in the cell inner membrane. It carries out the reaction a quinone + NADH + 5 H(+)(in) = a quinol + NAD(+) + 4 H(+)(out). Its function is as follows. NDH-1 shuttles electrons from NADH, via FMN and iron-sulfur (Fe-S) centers, to quinones in the respiratory chain. The immediate electron acceptor for the enzyme in this species is believed to be ubiquinone. Couples the redox reaction to proton translocation (for every two electrons transferred, four hydrogen ions are translocated across the cytoplasmic membrane), and thus conserves the redox energy in a proton gradient. In Helicobacter hepaticus (strain ATCC 51449 / 3B1), this protein is NADH-quinone oxidoreductase subunit B.